Here is a 336-residue protein sequence, read N- to C-terminus: Ketol-acid reductoisomerase (NADP(+)) (336 aa).

The region spanning 3-183 (AKMYYDRDVD…GCTKAGVLET (181 aa)) is the KARI N-terminal Rossmann domain. Residues 26–29 (YGSQ), arginine 49, serine 52, serine 54, and 84–87 (DEQQ) contribute to the NADP(+) site. Histidine 109 is an active-site residue. Glycine 135 contributes to the NADP(+) binding site. The region spanning 184–329 (TFKEETETDL…KELRDQMPFI (146 aa)) is the KARI C-terminal knotted domain. Positions 192, 196, 228, and 232 each coordinate Mg(2+). Serine 253 is a binding site for substrate.

This sequence belongs to the ketol-acid reductoisomerase family. It depends on Mg(2+) as a cofactor.

It catalyses the reaction (2R)-2,3-dihydroxy-3-methylbutanoate + NADP(+) = (2S)-2-acetolactate + NADPH + H(+). The catalysed reaction is (2R,3R)-2,3-dihydroxy-3-methylpentanoate + NADP(+) = (S)-2-ethyl-2-hydroxy-3-oxobutanoate + NADPH + H(+). It participates in amino-acid biosynthesis; L-isoleucine biosynthesis; L-isoleucine from 2-oxobutanoate: step 2/4. The protein operates within amino-acid biosynthesis; L-valine biosynthesis; L-valine from pyruvate: step 2/4. In terms of biological role, involved in the biosynthesis of branched-chain amino acids (BCAA). Catalyzes an alkyl-migration followed by a ketol-acid reduction of (S)-2-acetolactate (S2AL) to yield (R)-2,3-dihydroxy-isovalerate. In the isomerase reaction, S2AL is rearranged via a Mg-dependent methyl migration to produce 3-hydroxy-3-methyl-2-ketobutyrate (HMKB). In the reductase reaction, this 2-ketoacid undergoes a metal-dependent reduction by NADPH to yield (R)-2,3-dihydroxy-isovalerate. The chain is Ketol-acid reductoisomerase (NADP(+)) from Deinococcus radiodurans (strain ATCC 13939 / DSM 20539 / JCM 16871 / CCUG 27074 / LMG 4051 / NBRC 15346 / NCIMB 9279 / VKM B-1422 / R1).